The sequence spans 453 residues: MSQSPKVGFVSLGCPKALVDSEQIITQLRAEGYEISGTYDGADLVVVNTCGFIDEAVQESLDAIGEALTENGKVIVTGCLGAKSSASGSNLIEEVHPKVLAVTGPHAVGEVMQAVHSHLPKPHDPFVDLVPAAGIKLTPRHYAYLKISEGCNHRCTFCIIPSMRGDLVSRPVAEVMLEAENLFKSGVKELLVISQDTSAYGVDVKYRTGFWNGKPIKTRMTDLVAALGELAAQYGAWVRLHYVYPYPSVDEVIPLMAEGPFKGHVLPYLDVPFQHAHPEVLKRMKRPANAEKVLERVQKWREICPDLTIRSTFIAGFPGETEEQFETLLDFVREAELDRVGCFAYSPVEGATANDLDGALPDEVREERRARFMEVAEEVSAHRMQRKVGKTLKVLIDEVGEEGGIGRTAADAPEIDGVVYVEPAAKASKRYKVGDFVSVKITGADGHDLWGEV.

Residues 5–120 (PKVGFVSLGC…VMQAVHSHLP (116 aa)) form the MTTase N-terminal domain. [4Fe-4S] cluster contacts are provided by cysteine 14, cysteine 50, cysteine 79, cysteine 151, cysteine 155, and cysteine 158. The region spanning 137–383 (LTPRHYAYLK…EVAEEVSAHR (247 aa)) is the Radical SAM core domain. One can recognise a TRAM domain in the interval 385 to 453 (QRKVGKTLKV…ADGHDLWGEV (69 aa)).

Belongs to the methylthiotransferase family. RimO subfamily. It depends on [4Fe-4S] cluster as a cofactor.

Its subcellular location is the cytoplasm. The catalysed reaction is L-aspartate(89)-[ribosomal protein uS12]-hydrogen + (sulfur carrier)-SH + AH2 + 2 S-adenosyl-L-methionine = 3-methylsulfanyl-L-aspartate(89)-[ribosomal protein uS12]-hydrogen + (sulfur carrier)-H + 5'-deoxyadenosine + L-methionine + A + S-adenosyl-L-homocysteine + 2 H(+). In terms of biological role, catalyzes the methylthiolation of an aspartic acid residue of ribosomal protein uS12. The chain is Ribosomal protein uS12 methylthiotransferase RimO from Burkholderia cenocepacia (strain ATCC BAA-245 / DSM 16553 / LMG 16656 / NCTC 13227 / J2315 / CF5610) (Burkholderia cepacia (strain J2315)).